The primary structure comprises 264 residues: Glutamate 5-kinase (264 aa).

Lysine 15 contributes to the ATP binding site. Positions 55, 142, and 154 each coordinate substrate. ATP contacts are provided by residues 174-175 and 216-222; these read SD and TGGIATK.

The protein belongs to the glutamate 5-kinase family.

It is found in the cytoplasm. It catalyses the reaction L-glutamate + ATP = L-glutamyl 5-phosphate + ADP. Its pathway is amino-acid biosynthesis; L-proline biosynthesis; L-glutamate 5-semialdehyde from L-glutamate: step 1/2. Catalyzes the transfer of a phosphate group to glutamate to form L-glutamate 5-phosphate. The chain is Glutamate 5-kinase from Alkaliphilus metalliredigens (strain QYMF).